Reading from the N-terminus, the 1250-residue chain is MVHPVKLGRNVRMSYSKIDEVIDMPNLIEIQKNSYEQFLKEGFKEVFKDVNPITDYTGNLILEFVDYSLDEPPKYSVDECKERDATYAAPLKVKVRLINKETGEVKEQEIFMGDFPLMTETGTFIINGAERVIVSQLVRSPGIYYAMKIDKAGKQLFSNTVIPNRGAWLEYETDSNDVLSVRIDRTRKLPLTVLVRALGYGTDLEITELFGEDERILATIQKDSTKTEEEGLLEIYKRLRPGEPPTVESAKALLHGLFFDPKRYDLAKPGRFKFNKKLSIAARIHGFIAGENIKDPDTGEIIVAEGETISREKAETIQNAGVNTVILRVDGKNVKVIGNDMVDIKRYVDFDPKEIGINEKVKRDVLMEILEEYKGKGDDAIKKALQERIDDLIPKHITKEDIISSISYIIGLSYGIGSTDDIDHLGNRRLRSVGELLQNQFRIGLSRMERVVRERMTIQDLDVVTPQALINIRPVAAAIKEFFGSSQLSQFMDQTNPLAELTHKRRLSALGPGGLSRERAGFEVRDVHHSHYGRMCPIETPEGPNIGLIGSLSTYARVNEYGFIETPYRKVSKEEPGKVTNEIVYLTADEEDEYIIAQANEPLDEEGRFISNKVVCRYKEEFIEVDPSKIDFMDVSPKQIVSVATSMIPFLENDDANRALMGANMQRQAVPLIKTESPIVGTGIEYRAARDSGVVILAKNPGVVEKVTANEIIIRTKDGKRDTYKLLKYMRSNQGTCINQRPIVKKGEEVEAGDVIADGPSTDNGEIALGKNVLVGFMTWEGYNYEDAILISERLVKDDVFTSIHIEEYEAEARDTKLGPEDITREIPNVSEDALKDLNSEGIIRIGAEVRAGDILVGKVTPKGETELTAEERLLRAIFGEKAREVRDTSLRVPHGESGIVVDVKIFTRENGDELAPGVNKLVRVYVAQKRKISVGDKMAGRHGNKGVISRILPVEDMPFLPDGTPLDIVLNPLGVPSRMNIGQVLEVHLGYAAKALGWKVATPVFDGATEEDIVQTLRKAGLAEDGKSILYDGRTGEPFENRVTVGYMYMLKLAHLVDDKIHARSTGPYSLVTQQPLGGKAQFGGQRFGEMEVWALEAYGAAYTLQEILTVKSDDVVGRVKTYEAIVKGENVPEPGIPECFKVLIKELQSLCLDVKVYSEEQEEIAIKESVEDDLEELNVNIEGREDEVNFNEFNDIGEEITDEDLEVEDFDLQDLNDDDINPDDTIDAELDDNLFDDDFDDTFDDDDL.

Residues 1215-1250 (QDLNDDDINPDDTIDAELDDNLFDDDFDDTFDDDDL) form a disordered region.

Belongs to the RNA polymerase beta chain family. In terms of assembly, the RNAP catalytic core consists of 2 alpha, 1 beta, 1 beta' and 1 omega subunit. When a sigma factor is associated with the core the holoenzyme is formed, which can initiate transcription.

It catalyses the reaction RNA(n) + a ribonucleoside 5'-triphosphate = RNA(n+1) + diphosphate. In terms of biological role, DNA-dependent RNA polymerase catalyzes the transcription of DNA into RNA using the four ribonucleoside triphosphates as substrates. The sequence is that of DNA-directed RNA polymerase subunit beta from Acetivibrio thermocellus (strain ATCC 27405 / DSM 1237 / JCM 9322 / NBRC 103400 / NCIMB 10682 / NRRL B-4536 / VPI 7372) (Clostridium thermocellum).